The sequence spans 208 residues: Putative dioxygenase RF_0617 (208 aa).

Belongs to the intradiol ring-cleavage dioxygenase family.

The chain is Putative dioxygenase RF_0617 from Rickettsia felis (strain ATCC VR-1525 / URRWXCal2) (Rickettsia azadi).